A 122-amino-acid chain; its full sequence is Large ribosomal subunit protein uL14 (122 aa).

Belongs to the universal ribosomal protein uL14 family. Part of the 50S ribosomal subunit. Forms a cluster with proteins L3 and L19. In the 70S ribosome, L14 and L19 interact and together make contacts with the 16S rRNA in bridges B5 and B8.

Binds to 23S rRNA. Forms part of two intersubunit bridges in the 70S ribosome. This Mycoplasma genitalium (strain ATCC 33530 / DSM 19775 / NCTC 10195 / G37) (Mycoplasmoides genitalium) protein is Large ribosomal subunit protein uL14.